Consider the following 534-residue polypeptide: MFS transporter fmqE (534 aa).

Transmembrane regions (helical) follow at residues 48–68, 109–129, 136–156, 169–189, 194–214, 228–248, 326–346, 349–369, 379–399, 407–427, 447–467, and 478–498; these read LLLF…VCAS, LWTS…GFLA, WTAV…VFSS, GAVV…VAPI, ALLQ…LGIV, IVFG…FLVP, AIGV…GLNV, VFDI…LGWL, LWLW…ALGF, LAIA…TVGV, VAFI…PYMY, and TGFV…FLVP.

Belongs to the major facilitator superfamily. Sugar transporter (TC 2.A.1.1) family.

The protein localises to the cytoplasmic vesicle membrane. Its function is as follows. MFS transporter; part of the gene cluster that mediates the biosynthesis of the antitumor cytotoxic peptidyl alkaloids fumiquinazolines that confer a dual-usage capability to defend against phagocytes in the environment and animal hosts. Probably involved in fumiquinazolines metabolism and transport. This Aspergillus fumigatus (strain ATCC MYA-4609 / CBS 101355 / FGSC A1100 / Af293) (Neosartorya fumigata) protein is MFS transporter fmqE.